A 357-amino-acid polypeptide reads, in one-letter code: Transactivator protein DR7 (357 aa).

The interval 107 to 187 (LVGKDGAVYV…LLTVGGLCQT (81 aa)) is interaction with host p53.

The protein belongs to the herpesviridae US22 family. In terms of assembly, interacts with host p53 and inhibits p53-activated transcription.

In terms of biological role, involved in transactivation. Displays transforming activity. This Homo sapiens (Human) protein is Transactivator protein DR7 (DR7L).